The sequence spans 66 residues: MAVPKKKTSKSKRNMRRSHLALGKVNVIVDSQTGEYKLPHHVSLVDGTYNNRQVVTKKIETAEEVA.

It belongs to the bacterial ribosomal protein bL32 family.

In Rickettsia canadensis (strain McKiel), this protein is Large ribosomal subunit protein bL32.